The chain runs to 145 residues: Putative pre-16S rRNA nuclease (145 aa).

It belongs to the YqgF nuclease family.

The protein localises to the cytoplasm. Functionally, could be a nuclease involved in processing of the 5'-end of pre-16S rRNA. In Pseudomonas fluorescens (strain SBW25), this protein is Putative pre-16S rRNA nuclease.